We begin with the raw amino-acid sequence, 663 residues long: Polyunsaturated fatty acid lipoxygenase ALOX15 (663 aa).

Positions 2 to 115 constitute a PLAT domain; the sequence is GLYRVRVSTG…ILSLPEGTAR (114 aa). The Lipoxygenase domain occupies 116-663; the sequence is TVVDDPQGLF…PSRVENSVAI (548 aa). The Fe cation site is built by H361, H366, H541, H545, and I663.

The protein belongs to the lipoxygenase family. In terms of assembly, interacts with PEBP1; in response to IL13/interleukin-13, prevents the interaction of PEBP1 with RAF1 to activate the ERK signaling cascade. The cofactor is Fe cation.

It localises to the cytoplasm. The protein resides in the cytosol. Its subcellular location is the cell membrane. The protein localises to the lipid droplet. It carries out the reaction (5Z,8Z,11Z,14Z)-eicosatetraenoate + O2 = (12S)-hydroperoxy-(5Z,8Z,10E,14Z)-eicosatetraenoate. It catalyses the reaction (5Z,8Z,11Z,14Z)-eicosatetraenoate + O2 = (15S)-hydroperoxy-(5Z,8Z,11Z,13E)-eicosatetraenoate. The catalysed reaction is (9Z,12Z)-octadecadienoate + O2 = (13S)-hydroperoxy-(9Z,11E)-octadecadienoate. The enzyme catalyses (5Z,8Z,11Z,14Z)-eicosatetraenoate + 2 O2 = (14R,15S)-dihydroperoxy-(5Z,8Z,10E,12E)-eicosatetraenoate. It carries out the reaction (5Z,8Z,11Z,14Z)-eicosatetraenoate + 2 O2 = (8S,15S)-dihydroperoxy-(5Z,9E,11Z,13E)-eicosatetraenoate. It catalyses the reaction (14S,15R)-epoxy-(5Z,8Z,11Z)-eicosatrienoate + O2 = (8S)-hydroperoxy-(14S,15R)-epoxy-(5Z,9E,11Z)-eicosatrienoate. The catalysed reaction is (14S,15R)-epoxy-(5Z,8Z,11Z)-eicosatrienoate + O2 = (12S)-hydroperoxy-(14S,15R)-epoxy-(5Z,8Z,10E)-eicosatrienoate. The enzyme catalyses (14R,15S)-epoxy-(5Z,8Z,11Z)-eicosatrienoate + O2 = (5S)-hydroperoxy-(14R,15S)-epoxy-(6E,8Z,11Z)-eicosatrienoate. It carries out the reaction (14R,15S)-epoxy-(5Z,8Z,11Z)-eicosatrienoate + O2 = (12S)-hydroperoxy-(14R,15S)-epoxy-(5Z,8Z,10E)-eicosatrienoate. It catalyses the reaction (15R)-hydroperoxy-(5Z,8Z,11Z,13E)-eicosatetraenoate = 15-oxo-(5Z,8Z,11Z,13E)-eicosatetraenoate + H2O. The catalysed reaction is (15S)-hydroperoxy-(5Z,8Z,11Z,13E)-eicosatetraenoate = (14S,15S)-epoxy-(5Z,8Z,10E,12E)-eicosatetraenoate + H2O. The enzyme catalyses (12S)-hydroperoxy-(5Z,8Z,10E,14Z)-eicosatetraenoate = (8S)-hydroxy-(11S,12S)-epoxy-(5Z,9E,14Z)-eicosatrienoate. It carries out the reaction (4Z,7Z,10Z,13Z,16Z,19Z)-docosahexaenoate + O2 = 14-hydroperoxy-(4Z,7Z,10Z,12E,16Z,19Z)-docosahexaenoate. It catalyses the reaction (4Z,7Z,10Z,13Z,16Z)-docosapentaenoate + O2 = 14-hydroperoxy-(4Z,7Z,10Z,12E,16Z)-docosapentaenoate. The catalysed reaction is (7Z,10Z,13Z,16Z,19Z)-docosapentaenoate + O2 = 14-hydroperoxy-(7Z,10Z,12E,16Z,19Z)-docosapentaenoate. The enzyme catalyses (4Z,7Z,10Z,13Z,16Z,19Z)-docosahexaenoate + O2 = (14S)-hydroperoxy-(4Z,7Z,10Z,12E,16Z,19Z)-docosahexaenoate. It carries out the reaction (4Z,7Z,10Z,13Z,16Z,19Z)-docosahexaenoate + O2 = (17S)-hydroperoxy-(4Z,7Z,10Z,13Z,15E,19Z)-docosahexaenoate. It catalyses the reaction (7S)-hydroperoxy-(4Z,8E,10Z,13Z,16Z,19Z)-docosahexaenoate + O2 = (7S,14S)-dihydroperoxy-(4Z,8E,10Z,12E,16Z,19Z)-docosahexaenoate. The catalysed reaction is (7S)-hydroperoxy-(4Z,8E,10Z,13Z,16Z,19Z)-docosahexaenoate + O2 = (7S,17S)-dihydroperoxy-(4Z,8E,10Z,13Z,15E,19Z)-docosahexaenoate. The enzyme catalyses (4Z,7Z,10Z,13Z,16Z,19Z)-docosahexaenoate + O2 = (11S)-hydroperoxy-(4Z,7Z,9E,13Z,16Z,19Z)-docosahexaenoate. It carries out the reaction N-(5Z,8Z,11Z,14Z)-eicosatetraenoyl-taurine + O2 = N-(12S)-hydroperoxy-(5Z,8Z,10E,14Z)-eicosatetraenoyl-taurine. It catalyses the reaction N-(5Z,8Z,11Z,14Z)-eicosatetraenoyl-gamma-aminobutanoate + O2 = N-(12S)-hydroperoxy-(5Z,8Z,10E,14Z)-eicosatetraenoyl-gamma-aminobutanoate. The catalysed reaction is N-(5Z,8Z,11Z,14Z)-eicosatetraenoyl-glycine + O2 = N-(12S)-hydroperoxy-(5Z,8Z,10E,14Z)-eicosatetraenoyl-glycine. The enzyme catalyses N-(5Z,8Z,11Z,14Z)-eicosatetraenoyl-L-alanine + O2 = N-(12S)-hydroperoxy-(5Z,8Z,10E,14Z)-eicosatetraenoyl-alanine. It carries out the reaction N-(5Z,8Z,11Z,14Z)-eicosatetraenoyl-taurine + O2 = N-(15S)-hydroperoxy-(5Z,8Z,11Z,13E)-eicosatetraenoyl-taurine. It catalyses the reaction N-(5Z,8Z,11Z,14Z)-eicosatetraenoyl-gamma-aminobutanoate + O2 = N-(15S)-hydroperoxy-(5Z,8Z,11Z,13E)-eicosatetraenoyl-gamma-aminobutanoate. The catalysed reaction is N-(5Z,8Z,11Z,14Z)-eicosatetraenoyl-glycine + O2 = N-(15S)-hydroperoxy-(5Z,8Z,11Z,13E)-eicosatetraenoyl-glycine. The enzyme catalyses N-(5Z,8Z,11Z,14Z)-eicosatetraenoyl-L-alanine + O2 = N-(15S)-hydroperoxy-(5Z,8Z,11Z,13E)-eicosatetraenoyl-alanine. It participates in lipid metabolism; hydroperoxy eicosatetraenoic acid biosynthesis. Functionally, non-heme iron-containing dioxygenase that catalyzes the stereo-specific peroxidation of free and esterified polyunsaturated fatty acids generating a spectrum of bioactive lipid mediators. It inserts peroxyl groups at C12 or C15 of arachidonate ((5Z,8Z,11Z,14Z)-eicosatetraenoate) producing both 12-hydroperoxyeicosatetraenoate/12-HPETE and 15-hydroperoxyeicosatetraenoate/15-HPETE. It may then act on 12-HPETE to produce hepoxilins, which may show pro-inflammatory properties. Can also peroxidize linoleate ((9Z,12Z)-octadecadienoate) to 13-hydroperoxyoctadecadienoate. May participate in the sequential oxidations of DHA ((4Z,7Z,10Z,13Z,16Z,19Z)-docosahexaenoate) to generate specialized pro-resolving mediators (SPMs)like resolvin D5 ((7S,17S)-diHPDHA) and (7S,14S)-diHPDHA, that actively down-regulate the immune response and have anti-aggregation properties with platelets. Can convert epoxy fatty acids to hydroperoxy-epoxides derivatives followed by an intramolecular nucleophilic substitution leading to the formation of monocyclic endoperoxides. Plays an important role during the maintenance of self-tolerance by peroxidizing membrane-bound phosphatidylethanolamine which can then signal the sorting process for clearance of apoptotic cells during inflammation and prevent an autoimmune response. In addition to its role in the immune and inflammatory responses, this enzyme may play a role in epithelial wound healing in the cornea through production of lipoxin A4 (LXA(4)) and docosahexaenoic acid-derived neuroprotectin D1 (NPD1; 10R,17S-HDHA), both lipid autacoids exhibit anti-inflammatory and neuroprotective properties. Furthermore, it may regulate actin polymerization which is crucial for several biological processes such as the phagocytosis of apoptotic cells. It is also implicated in the generation of endogenous ligands for peroxisome proliferator activated receptor (PPAR-gamma), hence modulating macrophage development and function. It may also exert a negative effect on skeletal development by regulating bone mass through this pathway. As well as participates in ER stress and downstream inflammation in adipocytes, pancreatic islets, and liver. Finally, it is also involved in the cellular response to IL13/interleukin-13. In Sus scrofa (Pig), this protein is Polyunsaturated fatty acid lipoxygenase ALOX15.